Consider the following 316-residue polypeptide: tRNA dimethylallyltransferase (316 aa).

17–24 is a binding site for ATP; the sequence is GPTASGKT. 19-24 contributes to the substrate binding site; sequence TASGKT. Interaction with substrate tRNA regions lie at residues 42–45, 166–170, and 247–252; these read DSAL, QRLSR, and RCVGYR.

The protein belongs to the IPP transferase family. Monomer. Mg(2+) serves as cofactor.

It catalyses the reaction adenosine(37) in tRNA + dimethylallyl diphosphate = N(6)-dimethylallyladenosine(37) in tRNA + diphosphate. Its function is as follows. Catalyzes the transfer of a dimethylallyl group onto the adenine at position 37 in tRNAs that read codons beginning with uridine, leading to the formation of N6-(dimethylallyl)adenosine (i(6)A). The polypeptide is tRNA dimethylallyltransferase (Salmonella enteritidis PT4 (strain P125109)).